The following is a 531-amino-acid chain: 2-isopropylmalate synthase (531 aa).

One can recognise a Pyruvate carboxyltransferase domain in the interval 8–284; it reads IIIFDTTLRD…LTNIDTKQIY (277 aa). Positions 17, 208, 210, and 244 each coordinate Mn(2+). Residues 408 to 531 form a regulatory domain region; it reads RVELVQVSCG…TQDKQTEVTA (124 aa).

The protein belongs to the alpha-IPM synthase/homocitrate synthase family. LeuA type 1 subfamily. In terms of assembly, homodimer. It depends on Mn(2+) as a cofactor.

Its subcellular location is the cytoplasm. It carries out the reaction 3-methyl-2-oxobutanoate + acetyl-CoA + H2O = (2S)-2-isopropylmalate + CoA + H(+). It participates in amino-acid biosynthesis; L-leucine biosynthesis; L-leucine from 3-methyl-2-oxobutanoate: step 1/4. Catalyzes the condensation of the acetyl group of acetyl-CoA with 3-methyl-2-oxobutanoate (2-ketoisovalerate) to form 3-carboxy-3-hydroxy-4-methylpentanoate (2-isopropylmalate). The polypeptide is 2-isopropylmalate synthase (Nostoc sp. (strain PCC 7120 / SAG 25.82 / UTEX 2576)).